The sequence spans 248 residues: Probable transcriptional regulatory protein Ccel_0181 (248 aa).

The protein belongs to the TACO1 family.

Its subcellular location is the cytoplasm. The chain is Probable transcriptional regulatory protein Ccel_0181 from Ruminiclostridium cellulolyticum (strain ATCC 35319 / DSM 5812 / JCM 6584 / H10) (Clostridium cellulolyticum).